Here is a 26-residue protein sequence, read N- to C-terminus: Fumarylacetoacetate hydrolase domain-containing protein 2A (26 aa).

This sequence belongs to the FAH family. It depends on Ca(2+) as a cofactor. Mg(2+) serves as cofactor.

Its function is as follows. May have hydrolase activity. This chain is Fumarylacetoacetate hydrolase domain-containing protein 2A, found in Mesocricetus auratus (Golden hamster).